The primary structure comprises 236 residues: MLHSPVFPAFGHHLAQHPAMPLAMELPRTPKASFNIDSILSRTDRPASKLSMEMPSWQPPSPPSMPYRYSYGMMPYPPVWLIKPTVGYPNMAQQQPMRMPRGECLCPDPTCKERVLPFSHCPNGAMNPLSWRTGPCKMKRIRTVFTPEQLEKLEKEFLKQQYMVGTERVDLASTLNLTETQVKVWFQNRRIKWRKQSLEQKKAKLSQFGVIPADSSDHTDDSRETEEDEDDLDVEL.

Residues 138 to 197 (MKRIRTVFTPEQLEKLEKEFLKQQYMVGTERVDLASTLNLTETQVKVWFQNRRIKWRKQS) constitute a DNA-binding region (homeobox). Positions 209–236 (GVIPADSSDHTDDSRETEEDEDDLDVEL) are disordered. Positions 223–236 (RETEEDEDDLDVEL) are enriched in acidic residues.

Expressed throughout the embryo during pre-gastrula stages. Localized to the dorsal lip of the blastopore (Spemann organizer) during early gastrulation, after which expression continues in tissues derived from the organizer. Expressed in the notochord during mid-gastrulation. During neurulation, expressed in the notochord, archenteron roof and the prospective floor plate. Also expressed in the region that will become the epiphysis, the pineal body precursor. By the early tailbud stages, expression is limited to posterior notochord and floor plate before becoming restricted to the tip of the tail in the tadpole.

It is found in the nucleus. Its function is as follows. Transcriptional repressor. Plays a fundamental role in notochord formation, acting within the mesodermal region. This Xenopus laevis (African clawed frog) protein is Homeobox protein notochord (noto).